The sequence spans 232 residues: Large ribosomal subunit protein uL10c (232 aa).

The N-terminal 52 residues, 1 to 52 (MESTLFLSKPLPTTIKTTTHSLSSVYPNPFKPNNLTFPRTTHKHPTTTTITA), are a transit peptide targeting the chloroplast.

It belongs to the universal ribosomal protein uL10 family. Component of the chloroplast large ribosomal subunit (LSU). Mature 70S chloroplast ribosomes of higher plants consist of a small (30S) and a large (50S) subunit. The 30S small subunit contains 1 molecule of ribosomal RNA (16S rRNA) and 24 different proteins. The 50S large subunit contains 3 rRNA molecules (23S, 5S and 4.5S rRNA) and 33 different proteins.

Its subcellular location is the plastid. It localises to the chloroplast. In terms of biological role, component of the chloroplast ribosome (chloro-ribosome), a dedicated translation machinery responsible for the synthesis of chloroplast genome-encoded proteins, including proteins of the transcription and translation machinery and components of the photosynthetic apparatus. The polypeptide is Large ribosomal subunit protein uL10c (RPL10) (Spinacia oleracea (Spinach)).